We begin with the raw amino-acid sequence, 181 residues long: Shikimate kinase (181 aa).

11 to 16 (GAGKSK) is a binding site for ATP. Position 15 (Ser-15) interacts with Mg(2+). The substrate site is built by Asp-33, Arg-58, and Gly-80. Arg-128 is an ATP binding site. Residue Arg-144 participates in substrate binding.

It belongs to the shikimate kinase family. As to quaternary structure, monomer. It depends on Mg(2+) as a cofactor.

It localises to the cytoplasm. It catalyses the reaction shikimate + ATP = 3-phosphoshikimate + ADP + H(+). The protein operates within metabolic intermediate biosynthesis; chorismate biosynthesis; chorismate from D-erythrose 4-phosphate and phosphoenolpyruvate: step 5/7. Catalyzes the specific phosphorylation of the 3-hydroxyl group of shikimic acid using ATP as a cosubstrate. In Leptospira biflexa serovar Patoc (strain Patoc 1 / Ames), this protein is Shikimate kinase.